The sequence spans 166 residues: Eukaryotic translation initiation factor 5A (166 aa).

Residues 1–21 are disordered; sequence MSDEDHDFSHQGGGDNASKTY. Lysine 53 is subject to Hypusine. The segment at 101-121 is disordered; it reads EDPSLPSHLSLMDDEGESRED. Acidic residues predominate over residues 112–121; that stretch reads MDDEGESRED.

It belongs to the eIF-5A family. Lys-53 undergoes hypusination, a unique post-translational modification that consists in the addition of a butylamino group from spermidine to lysine side chain, leading to the formation of the unusual amino acid hypusine. eIF-5As are the only known proteins to undergo this modification, which is essential for their function.

The protein resides in the cytoplasm. Its function is as follows. Translation factor that promotes translation elongation and termination, particularly upon ribosome stalling at specific amino acid sequence contexts. Binds between the exit (E) and peptidyl (P) site of the ribosome and promotes rescue of stalled ribosome: specifically required for efficient translation of polyproline-containing peptides as well as other motifs that stall the ribosome. Acts as a ribosome quality control (RQC) cofactor by joining the RQC complex to facilitate peptidyl transfer during CAT tailing step. The chain is Eukaryotic translation initiation factor 5A from Leishmania donovani.